The sequence spans 315 residues: tRNA dimethylallyltransferase (315 aa).

Position 13-20 (13-20) interacts with ATP; that stretch reads GPTAVGKT. 15–20 lines the substrate pocket; that stretch reads TAVGKT. Residues 38-41 form an interaction with substrate tRNA region; it reads DSRL.

It belongs to the IPP transferase family. In terms of assembly, monomer. The cofactor is Mg(2+).

It carries out the reaction adenosine(37) in tRNA + dimethylallyl diphosphate = N(6)-dimethylallyladenosine(37) in tRNA + diphosphate. In terms of biological role, catalyzes the transfer of a dimethylallyl group onto the adenine at position 37 in tRNAs that read codons beginning with uridine, leading to the formation of N6-(dimethylallyl)adenosine (i(6)A). This Herpetosiphon aurantiacus (strain ATCC 23779 / DSM 785 / 114-95) protein is tRNA dimethylallyltransferase.